We begin with the raw amino-acid sequence, 1076 residues long: Envelopment polyprotein (1076 aa).

The N-terminal stretch at 1–18 (MIVPIVLFLTLCPSELSA) is a signal peptide. At 19-455 (WGSPGDPIVC…NPQCYPVKKW (437 aa)) the chain is on the lumenal side. Cystine bridges form between cysteine 28–cysteine 51, cysteine 145–cysteine 158, cysteine 182–cysteine 329, cysteine 208–cysteine 218, cysteine 260–cysteine 307, cysteine 289–cysteine 294, cysteine 351–cysteine 354, cysteine 358–cysteine 426, and cysteine 378–cysteine 383. A helical membrane pass occupies residues 456 to 476 (LFLVVVIMCCYCALMLLTNIL). The segment at 477-523 (RAIGVWGTWVFAPIKLALALGLRLAKLSKKGLVAVVTRGQMIVNDEL) is golgi retention signal. Over 477 to 539 (RAIGVWGTWV…RGEQNEGRQG (63 aa)) the chain is Cytoplasmic. An internal signal sequence for glycoprotein C region spans residues 544–566 (GPIRHWLYSPALILILTTSICSG). 10 cysteine pairs are disulfide-bonded: cysteine 567-cysteine 608, cysteine 580-cysteine 590, cysteine 633-cysteine 729, cysteine 648-cysteine 845, cysteine 654-cysteine 702, cysteine 660-cysteine 709, cysteine 664-cysteine 691, cysteine 695-cysteine 700, cysteine 782-cysteine 797, and cysteine 813-cysteine 827. Residues 567-1040 (CDELVHAESK…ALFGDGITRW (474 aa)) lie on the Lumenal side of the membrane. Positions 654–660 (CRWAGDC) are fusion loop. The fusion loop stretch occupies residues 695 to 709 (CGGAACGCFNAAPSC). 2 N-linked (GlcNAc...) asparagine; by host glycosylation sites follow: asparagine 857 and asparagine 918. Intrachain disulfides connect cysteine 912/cysteine 982 and cysteine 922/cysteine 925. Asparagine 940 carries an N-linked (GlcNAc...) asparagine; by host glycan. A helical membrane pass occupies residues 1041–1061 (ILGIIGVLLACVMLFVVVVAI). Residues 1062 to 1076 (TRRLIKGLTQRAKVA) are Cytoplasmic-facing.

The protein belongs to the phlebovirus envelope glycoprotein family. In terms of assembly, heterodimer with glycoprotein C. Heterodimer with glycoprotein N. Homotrimer (postfusion). In terms of processing, specific enzymatic cleavages in vivo yield mature proteins Glycoprotein C, and Glycoprotein N. Post-translationally, glycosylated. Palmitoylated.

Its subcellular location is the virion membrane. The protein localises to the host Golgi apparatus membrane. It localises to the host endoplasmic reticulum membrane. Functionally, structural component of the virion that interacts with glycoprotein C. It shields the hydrophobic fusion loops of the glycoprotein C, preventing premature fusion. The glycoprotein protrusions are arranged on an icosahedral lattice, with T=12 triangulation. They are able to attach the virion to the host cell receptor CD209/DC-SIGN and to promote fusion of membranes with the late endosome after endocytosis of the virion. Plays a role in the packaging of ribonucleoproteins during virus assembly. In terms of biological role, structural component of the virion that interacts with glycoprotein N. Acts as a class II fusion protein that is activated upon acidification and subsequent repositioning of the glycoprotein N. The glycoprotein protrusions are arranged on an icosahedral lattice, with T=12 triangulation. They are able to attach the virion to the host cell receptor CD209/DC-SIGN and to promote fusion of membranes with the late endosome after endocytosis of the virion. The protein is Envelopment polyprotein (GP) of Alces americanus (American moose).